Reading from the N-terminus, the 116-residue chain is Putative superoxide reductase (116 aa).

His20, His46, His52, Cys101, and His104 together coordinate Fe cation.

This sequence belongs to the desulfoferrodoxin family. The cofactor is Fe cation.

It carries out the reaction reduced [rubredoxin] + superoxide + 2 H(+) = oxidized [rubredoxin] + H2O2. In terms of biological role, uses electrons from reduced NADP, by way of rubredoxin and an oxidoreductase, to catalyze the reduction of superoxide to hydrogen peroxide. This Methanocaldococcus jannaschii (strain ATCC 43067 / DSM 2661 / JAL-1 / JCM 10045 / NBRC 100440) (Methanococcus jannaschii) protein is Putative superoxide reductase.